Here is a 284-residue protein sequence, read N- to C-terminus: Bifunctional protein FolD (284 aa).

NADP(+) is bound by residues 166–168 (GAS) and Ile232.

This sequence belongs to the tetrahydrofolate dehydrogenase/cyclohydrolase family. As to quaternary structure, homodimer.

It catalyses the reaction (6R)-5,10-methylene-5,6,7,8-tetrahydrofolate + NADP(+) = (6R)-5,10-methenyltetrahydrofolate + NADPH. The enzyme catalyses (6R)-5,10-methenyltetrahydrofolate + H2O = (6R)-10-formyltetrahydrofolate + H(+). The protein operates within one-carbon metabolism; tetrahydrofolate interconversion. Functionally, catalyzes the oxidation of 5,10-methylenetetrahydrofolate to 5,10-methenyltetrahydrofolate and then the hydrolysis of 5,10-methenyltetrahydrofolate to 10-formyltetrahydrofolate. The chain is Bifunctional protein FolD from Shewanella pealeana (strain ATCC 700345 / ANG-SQ1).